A 57-amino-acid chain; its full sequence is Catalase-1 (57 aa).

A heme-binding site is contributed by Tyr37.

In terms of assembly, homodimer. Requires heme as cofactor.

It catalyses the reaction 2 H2O2 = O2 + 2 H2O. In terms of biological role, decomposes hydrogen peroxide into water and oxygen; serves to protect cells from the toxic effects of hydrogen peroxide. This chain is Catalase-1, found in Comamonas terrigena.